We begin with the raw amino-acid sequence, 197 residues long: Ribonuclease HII (197 aa).

The RNase H type-2 domain maps to 7 to 197; sequence LGIAGVDEVG…SFLRKLFATV (191 aa). Positions 13, 14, and 109 each coordinate a divalent metal cation.

This sequence belongs to the RNase HII family. Mn(2+) is required as a cofactor. Mg(2+) serves as cofactor.

It is found in the cytoplasm. The catalysed reaction is Endonucleolytic cleavage to 5'-phosphomonoester.. Functionally, endonuclease that specifically degrades the RNA of RNA-DNA hybrids. The sequence is that of Ribonuclease HII from Synechococcus sp. (strain CC9311).